Consider the following 187-residue polypeptide: UPF0232 protein JTY_0004 (187 aa).

Basic and acidic residues-rich tracts occupy residues 1-17 (MTGS…ERSM) and 24-45 (LVRR…DAGR). 2 disordered regions span residues 1 to 75 (MTGS…DPQP) and 168 to 187 (PSWR…DTYG).

It belongs to the UPF0232 family.

The polypeptide is UPF0232 protein JTY_0004 (Mycobacterium bovis (strain BCG / Tokyo 172 / ATCC 35737 / TMC 1019)).